Consider the following 394-residue polypeptide: ATP phosphoribosyltransferase regulatory subunit (394 aa).

It belongs to the class-II aminoacyl-tRNA synthetase family. HisZ subfamily. As to quaternary structure, heteromultimer composed of HisG and HisZ subunits.

It is found in the cytoplasm. It participates in amino-acid biosynthesis; L-histidine biosynthesis; L-histidine from 5-phospho-alpha-D-ribose 1-diphosphate: step 1/9. Functionally, required for the first step of histidine biosynthesis. May allow the feedback regulation of ATP phosphoribosyltransferase activity by histidine. The sequence is that of ATP phosphoribosyltransferase regulatory subunit from Pseudomonas aeruginosa (strain LESB58).